Here is a 413-residue protein sequence, read N- to C-terminus: Short-chain specific acyl-CoA dehydrogenase, mitochondrial (413 aa).

The transit peptide at 1-24 (MAAALLARACGPVRGALWPRDCRR) directs the protein to the mitochondrion. T27 is subject to Phosphothreonine. K51 bears the N6-acetyllysine; alternate mark. The residue at position 51 (K51) is an N6-succinyllysine; alternate. Position 72 is an N6-acetyllysine (K72). An N6-acetyllysine; alternate modification is found at K129. K129 is modified (N6-succinyllysine; alternate). Residues 152-161 (FALSEPGNGS) and 185-187 (WIT) contribute to the FAD site. Position 161 (S161) interacts with substrate. The residue at position 208 (K208) is an N6-acetyllysine. An N6-acetyllysine; alternate modification is found at K262. K262 is modified (N6-succinyllysine; alternate). 269 to 272 (DMGR) is a binding site for substrate. R297 is an FAD binding site. An N6-acetyllysine; alternate modification is found at K306. Residue K306 is modified to N6-succinyllysine; alternate. Residues Q308 and 366 to 370 (QILGG) each bind FAD. Residue E393 is the Proton acceptor of the active site. G394 lines the substrate pocket. 395–397 (TSE) provides a ligand contact to FAD.

This sequence belongs to the acyl-CoA dehydrogenase family. Homotetramer. FAD is required as a cofactor.

It localises to the mitochondrion matrix. The catalysed reaction is a short-chain 2,3-saturated fatty acyl-CoA + oxidized [electron-transfer flavoprotein] + H(+) = a short-chain (2E)-enoyl-CoA + reduced [electron-transfer flavoprotein]. The enzyme catalyses butanoyl-CoA + oxidized [electron-transfer flavoprotein] + H(+) = (2E)-butenoyl-CoA + reduced [electron-transfer flavoprotein]. It carries out the reaction pentanoyl-CoA + oxidized [electron-transfer flavoprotein] + H(+) = (2E)-pentenoyl-CoA + reduced [electron-transfer flavoprotein]. It catalyses the reaction hexanoyl-CoA + oxidized [electron-transfer flavoprotein] + H(+) = (2E)-hexenoyl-CoA + reduced [electron-transfer flavoprotein]. Its pathway is lipid metabolism; mitochondrial fatty acid beta-oxidation. Short-chain specific acyl-CoA dehydrogenase is one of the acyl-CoA dehydrogenases that catalyze the first step of mitochondrial fatty acid beta-oxidation, an aerobic process breaking down fatty acids into acetyl-CoA and allowing the production of energy from fats. The first step of fatty acid beta-oxidation consists in the removal of one hydrogen from C-2 and C-3 of the straight-chain fatty acyl-CoA thioester, resulting in the formation of trans-2-enoyl-CoA. Among the different mitochondrial acyl-CoA dehydrogenases, short-chain specific acyl-CoA dehydrogenase acts specifically on acyl-CoAs with saturated 4 to 6 carbons long primary chains. This chain is Short-chain specific acyl-CoA dehydrogenase, mitochondrial (ACADS), found in Sus scrofa (Pig).